A 425-amino-acid chain; its full sequence is Dihydroorotase (425 aa).

Zn(2+)-binding residues include His-61 and His-63. Residues 63-65 (HLR) and Asn-95 contribute to the substrate site. 3 residues coordinate Zn(2+): Asp-153, His-180, and His-233. Substrate is bound at residue Asn-279. Asp-306 contributes to the Zn(2+) binding site. The active site involves Asp-306. Residue His-310 coordinates substrate.

This sequence belongs to the metallo-dependent hydrolases superfamily. DHOase family. Class I DHOase subfamily. It depends on Zn(2+) as a cofactor.

The enzyme catalyses (S)-dihydroorotate + H2O = N-carbamoyl-L-aspartate + H(+). It functions in the pathway pyrimidine metabolism; UMP biosynthesis via de novo pathway; (S)-dihydroorotate from bicarbonate: step 3/3. In terms of biological role, catalyzes the reversible cyclization of carbamoyl aspartate to dihydroorotate. The chain is Dihydroorotase from Geotalea daltonii (strain DSM 22248 / JCM 15807 / FRC-32) (Geobacter daltonii).